The sequence spans 217 residues: Large ribosomal subunit protein uL3 (217 aa).

Gln154 bears the N5-methylglutamine mark.

This sequence belongs to the universal ribosomal protein uL3 family. As to quaternary structure, part of the 50S ribosomal subunit. Forms a cluster with proteins L14 and L19. Methylated by PrmB.

In terms of biological role, one of the primary rRNA binding proteins, it binds directly near the 3'-end of the 23S rRNA, where it nucleates assembly of the 50S subunit. The protein is Large ribosomal subunit protein uL3 of Burkholderia ambifaria (strain ATCC BAA-244 / DSM 16087 / CCUG 44356 / LMG 19182 / AMMD) (Burkholderia cepacia (strain AMMD)).